Here is a 300-residue protein sequence, read N- to C-terminus: Regulatory protein NocR (300 aa).

The region spanning 1-59 (MIQSRQLEAFRAVMLTGGMTSAANLVRITQPAISRLIRDLEEEIGISLFERTGNRLRPT) is the HTH lysR-type domain. A DNA-binding region (H-T-H motif) is located at residues 19-38 (MTSAANLVRITQPAISRLIR).

This sequence belongs to the LysR transcriptional regulatory family.

Its function is as follows. Positive regulatory protein for the noc operon involved in nopaline catabolism and uptake. The sequence is that of Regulatory protein NocR (nocR) from Agrobacterium fabrum (strain C58 / ATCC 33970) (Agrobacterium tumefaciens (strain C58)).